The sequence spans 369 residues: Ribosomal RNA large subunit methyltransferase M (369 aa).

Residues serine 198, 231-234 (APGG), aspartate 250, aspartate 270, and aspartate 287 each bind S-adenosyl-L-methionine. The Proton acceptor role is filled by lysine 316.

This sequence belongs to the class I-like SAM-binding methyltransferase superfamily. RNA methyltransferase RlmE family. RlmM subfamily. In terms of assembly, monomer.

Its subcellular location is the cytoplasm. The catalysed reaction is cytidine(2498) in 23S rRNA + S-adenosyl-L-methionine = 2'-O-methylcytidine(2498) in 23S rRNA + S-adenosyl-L-homocysteine + H(+). In terms of biological role, catalyzes the 2'-O-methylation at nucleotide C2498 in 23S rRNA. The chain is Ribosomal RNA large subunit methyltransferase M from Idiomarina loihiensis (strain ATCC BAA-735 / DSM 15497 / L2-TR).